The sequence spans 329 residues: MDSCDFRGLTSRRRTSNLKNYFVGATPLQKRLELVRRQNSDFPSPSRRKIPQCSQLQEDIDPQKVAFLLHKQWTIYSLTPLYKFSYSNLKDYSRLLSAFIVAEKQKGVAVEVGEDFNIKVIFSTLLGVKGTQRDHEAFLVQILSKSQSSREHREDKVLWTGWFCCVFGESLQETVSEDFTCLPLFLANGAESNTSLIRDWFQKTFDCCFSPLAISAFNLSWMAAMWTACKMDRYMATTEFLWSVPCSPQSLDISYAIHPEDAKALWESVHKTPGEVTQEEVDLFMNCLYSHFHRHFKIHLAATRLVRVSTSVASAHTDGKIKVSLNRSN.

Residues Ser40 and Ser54 each carry the phosphoserine modification.

Belongs to the CENP-L/IML3 family. Component of the CENPA-CAD complex, composed of CENPI, CENPK, CENPL, CENPO, CENPP, CENPQ, CENPR and CENPS. The CENPA-CAD complex interacts with the CENPA-NAC complex, at least composed of CENPA, CENPC, CENPH, CENPM, CENPN, CENPT and CENPU.

The protein localises to the nucleus. It is found in the chromosome. The protein resides in the centromere. In terms of biological role, component of the CENPA-CAD (nucleosome distal) complex, a complex recruited to centromeres which is involved in assembly of kinetochore proteins, mitotic progression and chromosome segregation. May be involved in incorporation of newly synthesized CENPA into centromeres via its interaction with the CENPA-NAC complex. The polypeptide is Centromere protein L (Cenpl) (Mus musculus (Mouse)).